A 292-amino-acid chain; its full sequence is uncharacterized protein (292 aa).

Residues Ser-44 and Tyr-106 each act as charge relay system in the active site. Tyr-132 acts as the Proton donor in catalysis. Lys-161 (schiff-base intermediate with substrate) is an active-site residue.

This sequence belongs to the DapA family. As to quaternary structure, homotetramer.

Its subcellular location is the cytoplasm. This is an uncharacterized protein from Thermoplasma acidophilum (strain ATCC 25905 / DSM 1728 / JCM 9062 / NBRC 15155 / AMRC-C165).